A 301-amino-acid polypeptide reads, in one-letter code: Large ribosomal subunit protein uL4 (301 aa).

Residues 1 to 223 (MNETKTIDVL…TQALSAQPEV (223 aa)) form a large ribosomal subunit protein uL4 region. Residues 49–105 (QGTHATKTRGQVSGGGKKPWRQKGTGRARQGSTRAPQWVGGGTVHGPQPRSYAQRTP) form a disordered region. The tract at residues 224–301 (PETNVADQHP…KSDSEKEDAK (78 aa)) is unknown.

The protein belongs to the universal ribosomal protein uL4 family. Part of the 50S ribosomal subunit.

Functionally, one of the primary rRNA binding proteins, this protein initially binds near the 5'-end of the 23S rRNA. It is important during the early stages of 50S assembly. It makes multiple contacts with different domains of the 23S rRNA in the assembled 50S subunit and ribosome. Forms part of the polypeptide exit tunnel. In Cutibacterium acnes (strain DSM 16379 / KPA171202) (Propionibacterium acnes), this protein is Large ribosomal subunit protein uL4.